The sequence spans 357 residues: Elongation factor Ts (357 aa).

An involved in Mg(2+) ion dislocation from EF-Tu region spans residues Thr82 to Val85.

Belongs to the EF-Ts family.

It is found in the cytoplasm. Associates with the EF-Tu.GDP complex and induces the exchange of GDP to GTP. It remains bound to the aminoacyl-tRNA.EF-Tu.GTP complex up to the GTP hydrolysis stage on the ribosome. The chain is Elongation factor Ts from Campylobacter jejuni (strain RM1221).